Reading from the N-terminus, the 238-residue chain is ATP synthase subunit a (238 aa).

5 helical membrane passes run 18-38, 76-96, 114-134, 166-186, and 193-213; these read LTLLAVCIVTILLIFGFVFWA, YSLLLFTIFLFVAVANNLGLF, NLAFDLALSLFVTLLVHIEGI, SLAIRLFGNIFAGEVVTGLIV, and LYWWPIAFLVNIAWTAFSIFI.

Belongs to the ATPase A chain family. F-type ATPases have 2 components, CF(1) - the catalytic core - and CF(0) - the membrane proton channel. CF(1) has five subunits: alpha(3), beta(3), gamma(1), delta(1), epsilon(1). CF(0) has three main subunits: a(1), b(2) and c(9-12). The alpha and beta chains form an alternating ring which encloses part of the gamma chain. CF(1) is attached to CF(0) by a central stalk formed by the gamma and epsilon chains, while a peripheral stalk is formed by the delta and b chains.

The protein localises to the cell membrane. In terms of biological role, key component of the proton channel; it plays a direct role in the translocation of protons across the membrane. The chain is ATP synthase subunit a from Streptococcus equi subsp. zooepidemicus (strain H70).